A 321-amino-acid chain; its full sequence is Urease accessory protein UreD (321 aa).

This sequence belongs to the UreD family. In terms of assembly, ureD, UreF and UreG form a complex that acts as a GTP-hydrolysis-dependent molecular chaperone, activating the urease apoprotein by helping to assemble the nickel containing metallocenter of UreC. The UreE protein probably delivers the nickel.

It is found in the cytoplasm. Required for maturation of urease via the functional incorporation of the urease nickel metallocenter. This chain is Urease accessory protein UreD, found in Photorhabdus laumondii subsp. laumondii (strain DSM 15139 / CIP 105565 / TT01) (Photorhabdus luminescens subsp. laumondii).